Consider the following 433-residue polypeptide: Enolase (433 aa).

(2R)-2-phosphoglycerate is bound at residue Q167. E209 serves as the catalytic Proton donor. Residues D246, E291, and D318 each coordinate Mg(2+). Residues K343, R372, S373, and K394 each coordinate (2R)-2-phosphoglycerate. K343 functions as the Proton acceptor in the catalytic mechanism.

This sequence belongs to the enolase family. In terms of assembly, component of the RNA degradosome, a multiprotein complex involved in RNA processing and mRNA degradation. Mg(2+) serves as cofactor.

Its subcellular location is the cytoplasm. It localises to the secreted. The protein localises to the cell surface. The enzyme catalyses (2R)-2-phosphoglycerate = phosphoenolpyruvate + H2O. Its pathway is carbohydrate degradation; glycolysis; pyruvate from D-glyceraldehyde 3-phosphate: step 4/5. Catalyzes the reversible conversion of 2-phosphoglycerate (2-PG) into phosphoenolpyruvate (PEP). It is essential for the degradation of carbohydrates via glycolysis. The chain is Enolase from Photorhabdus laumondii subsp. laumondii (strain DSM 15139 / CIP 105565 / TT01) (Photorhabdus luminescens subsp. laumondii).